Here is a 447-residue protein sequence, read N- to C-terminus: SPARC-related modular calcium-binding protein 2 (447 aa).

An N-terminal signal peptide occupies residues 1 to 21 (MLPPQLCWLPLLAALLPPVPA). The 53-residue stretch at 34 to 86 (QDKDRDCSLDCPSSPQKPLCASDGRTFLSRCEFQRAKCKDPQLEIAHRGNCKD) folds into the Kazal-like domain. 6 disulfide bridges follow: Cys-40–Cys-71, Cys-44–Cys-64, Cys-53–Cys-84, Cys-90–Cys-113, Cys-124–Cys-131, and Cys-133–Cys-153. Positions 87 to 153 (VSRCVAERKY…TAVAHKTPRC (67 aa)) constitute a Thyroglobulin type-1 1 domain. The disordered stretch occupies residues 147 to 230 (AHKTPRCPGS…QSALEEAKQP (84 aa)). Basic and acidic residues predominate over residues 161–172 (VPQREGAGKADD). Asn-206 is a glycosylation site (N-linked (GlcNAc...) asparagine). The segment covering 206–216 (NKTNKNSASSC) has biased composition (polar residues). The 69-residue stretch at 213-281 (ASSCDQEHQS…TSTRYEQPKC (69 aa)) folds into the Thyroglobulin type-1 2 domain. Cystine bridges form between Cys-216/Cys-240, Cys-251/Cys-258, and Cys-260/Cys-281. Residues 217-230 (DQEHQSALEEAKQP) show a composition bias toward basic and acidic residues. 2 consecutive EF-hand domains span residues 347 to 382 (LEER…LRKK) and 384 to 419 (KPKK…TREE). Asp-360, Asn-362, Ser-364, Asp-366, Glu-371, Asp-397, Asn-399, Asp-401, Ser-403, and Glu-408 together coordinate Ca(2+). N-linked (GlcNAc...) asparagine glycosylation occurs at Asn-362. The disordered stretch occupies residues 416 to 447 (TREEGKANTRKRHTPRGNAESSSSNRQPRKQG).

As to quaternary structure, binds various proteins from the extracellular matrix. N-glycosylated. As to expression, strongly expressed in ovary, followed by heart, muscle, spleen, brain, thymus, lung, liver, kidney, spleen, testis, ovary and skeletal muscle.

The protein resides in the secreted. Its subcellular location is the extracellular space. It is found in the extracellular matrix. It localises to the basement membrane. Its function is as follows. Can stimulate endothelial cell proliferation, migration, as well as angiogenesis. Promotes matrix assembly and cell adhesiveness. In Mus musculus (Mouse), this protein is SPARC-related modular calcium-binding protein 2 (Smoc2).